The primary structure comprises 452 residues: Serine carboxypeptidase-like 26 (452 aa).

An N-terminal signal peptide occupies residues 1–20 (MARLLLLFFFFLILLHYASC). N-linked (GlcNAc...) asparagine glycans are attached at residues N52 and N138. 3 disulfide bridges follow: C87/C338, C244/C256, and C280/C306. S180 is a catalytic residue. N327 carries N-linked (GlcNAc...) asparagine glycosylation. Active-site residues include D375 and H427.

Belongs to the peptidase S10 family. Ubiquitous.

The protein localises to the secreted. Probable carboxypeptidase. In Arabidopsis thaliana (Mouse-ear cress), this protein is Serine carboxypeptidase-like 26 (SCPL26).